Reading from the N-terminus, the 664-residue chain is 26S rRNA (cytosine-C(5))-methyltransferase nsun-1 (664 aa).

Positions 1-105 (MAIVKKKKVS…DDSDAGDHLP (105 aa)) are disordered. Basic residues predominate over residues 38–52 (PKKKKLVKKVKKSAK). Residues 53–68 (KAHEEEPIEQVEKLQL) show a composition bias toward basic and acidic residues. The segment covering 84-99 (SDDEDLRDDYSDDDSD) has biased composition (acidic residues). S-adenosyl-L-methionine contacts are provided by residues 313 to 319 (CSAPGGK), Asp337, and Asp382. The Nucleophile role is filled by Cys439. The tract at residues 513-664 (KMSKQGVMEK…RRKKMLAKQQ (152 aa)) is disordered. The segment covering 519-528 (VMEKEKEKAA) has biased composition (basic and acidic residues). Positions 541-550 (EASESSDDEE) are enriched in acidic residues. A compositionally biased stretch (basic residues) spans 563-572 (KPAKKQQQKK). Residues 606–618 (KAAEKQAAVKEDD) show a composition bias toward basic and acidic residues. 2 stretches are compositionally biased toward basic residues: residues 627–644 (KRAK…KRAA) and 652–664 (VKNR…AKQQ).

This sequence belongs to the class I-like SAM-binding methyltransferase superfamily. RsmB/NOP family.

It is found in the nucleus. It localises to the nucleolus. It carries out the reaction a cytidine in 26S rRNA + S-adenosyl-L-methionine = a 5-methylcytidine in 26S rRNA + S-adenosyl-L-homocysteine + H(+). Its function is as follows. Methyltransferase which methylates the carbon-5 position of cytosine 2982 to 5-methylcytosine (m5C2982) in 26S rRNA. May play a role in the translation of leucine and proline codons. May be required for the translation of specific mRNAs such as mRNAs involved in gonad development, collagen production and cuticle integrity. Plays a role in ensuring the correct localization of the germline-specific protein gld-1 during development. Not required for pre-rRNA processing, the production of mature 5S, 5.8S, 18S or 26S rRNAs or global translation. Plays a role in positively regulating fertility. The chain is 26S rRNA (cytosine-C(5))-methyltransferase nsun-1 from Caenorhabditis elegans.